We begin with the raw amino-acid sequence, 145 residues long: D-aminoacyl-tRNA deacylase (145 aa).

Residues 137–138 (GP) carry the Gly-cisPro motif, important for rejection of L-amino acids motif.

The protein belongs to the DTD family. Homodimer.

The protein localises to the cytoplasm. It carries out the reaction glycyl-tRNA(Ala) + H2O = tRNA(Ala) + glycine + H(+). The catalysed reaction is a D-aminoacyl-tRNA + H2O = a tRNA + a D-alpha-amino acid + H(+). Its function is as follows. An aminoacyl-tRNA editing enzyme that deacylates mischarged D-aminoacyl-tRNAs. Also deacylates mischarged glycyl-tRNA(Ala), protecting cells against glycine mischarging by AlaRS. Acts via tRNA-based rather than protein-based catalysis; rejects L-amino acids rather than detecting D-amino acids in the active site. By recycling D-aminoacyl-tRNA to D-amino acids and free tRNA molecules, this enzyme counteracts the toxicity associated with the formation of D-aminoacyl-tRNA entities in vivo and helps enforce protein L-homochirality. The polypeptide is D-aminoacyl-tRNA deacylase (Shewanella sp. (strain MR-4)).